A 457-amino-acid chain; its full sequence is uncharacterized protein (457 aa).

Residues 1 to 18 form the signal peptide; the sequence is MKLLISLLWSIFFSIVYS. Over 19–173 the chain is Lumenal; that stretch reads EKTLLNFKHY…GGLPASQFPR (155 aa). Residues 174–194 traverse the membrane as a helical segment; it reads MPISGGITIAYSVILALWMFF. At 195-207 the chain is on the cytoplasmic side; sequence RFQYKHSIVTVQK. A helical membrane pass occupies residues 208–228; that stretch reads AIMFLLIFSCAQQAVTSIVLD. At 229–243 the chain is on the lumenal side; that stretch reads TENLRNRGNFTWLGE. A helical transmembrane segment spans residues 244-264; the sequence is TLVSILFACQLVLDLALLLIL. The Cytoplasmic portion of the chain corresponds to 265 to 284; sequence SWGYTRYSTNMRDRLFTEAK. The helical transmembrane segment at 285 to 305 threads the bilayer; sequence IPLIICFFALFVVRFFAITIQ. The Lumenal segment spans residues 306–314; that stretch reads SIHLGLWFC. The helical transmembrane segment at 315–335 threads the bilayer; sequence FFFLTACISALYILFGAFVAL. At 336-358 the chain is on the cytoplasmic side; sequence PSTLRALVEQRYYTLHSIYKIFR. Residues 359–379 form a helical membrane-spanning segment; that stretch reads IMVLCGVVTIFSFSLVALIFC. Topologically, residues 380–457 are lumenal; sequence SNTNNNSTNK…EEDIRADKSK (78 aa).

The protein belongs to the LU7TM family.

It localises to the endoplasmic reticulum membrane. This is an uncharacterized protein from Schizosaccharomyces pombe (strain 972 / ATCC 24843) (Fission yeast).